The sequence spans 50 residues: MISMLRCTFFFVSVILITSYFVTPTMSIKCNRKRHVIKPHICRKICGKNG.

Residues 1–27 (MISMLRCTFFFVSVILITSYFVTPTMS) form the signal peptide. Lys-29 is modified (N6-formyllysine). A disulfide bridge links Cys-30 with Cys-42. N6-formyllysine occurs at positions 44 and 48. Asn-49 is modified (asparagine amide).

In terms of tissue distribution, expressed by the venom gland.

Its subcellular location is the secreted. In terms of biological role, potent anti-inflammatory agent. At low concentrations, mediates the degranulation of mast cells thus evoking an inflammatory response. Also acts as a neurotoxin capable of blocking a class of voltage-gated potassium channels. This is Mast cell degranulating peptide from Apis cerana cerana (Oriental honeybee).